Reading from the N-terminus, the 513-residue chain is MVNNLHSAHPTGAEYLKAVLSSKVYDVAQVTPLQDMAKLSERLGNKVFIKREDRQPVHSFKLRGAYAMIAGLSAEQKASGVIAASAGNHAQGVALSAKHLGLRALIVMPQNTPSIKVDAVRGFGGEVLLHGANFDEAKAKAIELAESKNMTFIPPFDHPAVIAGQGSIAMELLQQNSQIDRIFVPVGGGGLAAGIAVLIKQLMPEIKVIGVESKDSACLYRALKAGKPIDLDRVGLFADGVAVKRIGDETFRVCQQYIDDVVLVDGDEICAAVKDIFENVRAIAEPSGALSLAGLKKYVKEHNIQGETLVNVLSGANLNFHTLRYVSERCEIGEQHEALLAVTIPEQPGSFLKFCHILGHVPVTEFKYRYADDKQACIFVGVRITGQEEKQTIINQLQQNGYDLIDLSNDDIAKTHVRYMIGGRSNSPLKERLYSFEFPEQKGALLKFLETLGQTHWNISVFHYRAHGADYGNVLAGFQLNDEDLDAFNQHLEKLGYVYQDVTESPAYRYFLV.

The residue at position 61 (lysine 61) is an N6-(pyridoxal phosphate)lysine. Residues asparagine 88, 187 to 191 (GGGGL), and serine 314 each bind pyridoxal 5'-phosphate. 2 ACT-like domains span residues 338-409 (ALLA…DLSN) and 432-504 (RLYS…DVTE).

This sequence belongs to the serine/threonine dehydratase family. Homotetramer. Requires pyridoxal 5'-phosphate as cofactor.

The enzyme catalyses L-threonine = 2-oxobutanoate + NH4(+). The protein operates within amino-acid biosynthesis; L-isoleucine biosynthesis; 2-oxobutanoate from L-threonine: step 1/1. Functionally, catalyzes the anaerobic formation of alpha-ketobutyrate and ammonia from threonine in a two-step reaction. The first step involved a dehydration of threonine and a production of enamine intermediates (aminocrotonate), which tautomerizes to its imine form (iminobutyrate). Both intermediates are unstable and short-lived. The second step is the nonenzymatic hydrolysis of the enamine/imine intermediates to form 2-ketobutyrate and free ammonia. In the low water environment of the cell, the second step is accelerated by RidA. This chain is L-threonine dehydratase biosynthetic IlvA (ilvA), found in Pasteurella multocida (strain Pm70).